We begin with the raw amino-acid sequence, 352 residues long: F-box/kelch-repeat protein At1g57790 (352 aa).

The 47-residue stretch at K10 to S56 folds into the F-box domain. Kelch repeat units follow at residues V148–V189 and V190–G234.

This is F-box/kelch-repeat protein At1g57790 from Arabidopsis thaliana (Mouse-ear cress).